Here is a 645-residue protein sequence, read N- to C-terminus: MTKLQEMVTFRDVAVVFSEEELGLLDAAQRKLYHDVMLENFRNLLAVGCQSPNKMAPLDTTGIRCLPLGQLPCWQMTSHDVNKLARAPEDGINTPGKGPHLLEQCHSSCHWGAEQPSQAPEDDGCLENLPSNHSSSSDNQEFLSGRAQSSWSKAHFSERWNHEKHCPQTLVKTKSQLLAPGVNILGCISHHDHNILHKRDKVPSSGDCDQVIFPMTLLTQHCVYREQKAYQCSRGQEVFSDSPSLELHQQTLLGKKSPVHSTHKDTRHSPSVPIQPSVHPGRKRYWCHECGKGFRQSSALQTHQRVHTGEKPYRCDSCGKGFSRSSDLNIHRRVHTGEKPYKCEVCGKGFTQWAHLQAHERIHTGEKPYKCGDCGKRFSCSSNLHTHQRVHTEEKPYECNECGKRFSLSGNLDIHQRVHTGEKPYKCEECGKGFSSASSFQSHQRVHTGEKPFHCSVCGKNFSRSSHFLDHQRIHTGEKPYRCEVCGKRFPWSLSLHSHQSVHTGKKPYKCGECGKGFSHASSLQAHHSVHTGEKPFKCNVCQKQFSKTSNLQAHQRVHTGEKPYKCDTCGKAFSQKSSLQVHQRIHTGEKPFKCEECGKEFRWSVGLSSHQRVHTGEKPYTCQQCGKGFSQASYFHMHQRVHTI.

The KRAB domain occupies 8–86 (VTFRDVAVVF…TSHDVNKLAR (79 aa)). 2 disordered regions span residues 112-144 (GAEQ…EFLS) and 255-280 (KKSP…SVHP). The span at 129-144 (LPSNHSSSSDNQEFLS) shows a compositional bias: polar residues. 13 consecutive C2H2-type zinc fingers follow at residues 285–307 (YWCH…QRVH), 313–335 (YRCD…RRVH), 341–363 (YKCE…ERIH), 369–391 (YKCG…QRVH), 397–419 (YECN…QRVH), 425–447 (YKCE…QRVH), 453–475 (FHCS…QRIH), 481–503 (YRCE…QSVH), 509–531 (YKCG…HSVH), 537–559 (FKCN…QRVH), 565–587 (YKCD…QRIH), 593–615 (FKCE…QRVH), and 621–643 (YTCQ…QRVH).

The protein belongs to the krueppel C2H2-type zinc-finger protein family.

It is found in the nucleus. Its function is as follows. May be involved in transcriptional regulation. The chain is Zinc finger protein 235 (Znf235) from Mus musculus (Mouse).